We begin with the raw amino-acid sequence, 325 residues long: Protein UL76 (325 aa).

The disordered stretch occupies residues 222–286 (ARASAVAGGR…VRGGGAVEPA (65 aa)). Residues 247–258 (GPGAQTVSASGA) show a composition bias toward low complexity.

The protein belongs to the herpesviridae UL24 family.

It is found in the virion. The protein resides in the host cytoplasm. It localises to the host nucleus. The protein localises to the host nucleolus. Its subcellular location is the host Golgi apparatus. Functionally, may participate in nuclear egress of viral particles. Plays a role in the dispersal of several host nucleolar proteins including NCL/nucleolin and NPM1. Since deletion of host NCL/nucleolin negatively impact on nuclear egress, UL76 supposedly acts on this process through its effect on host nucleoli. Induces cell cycle arrest in host cells at the G2/M phase following by apoptosis. The mechanism involves the inhibition of host mitotic complex cyclinB/CDK1. The chain is Protein UL76 (UL76) from Human cytomegalovirus (strain Merlin) (HHV-5).